The following is a 403-amino-acid chain: Exodeoxyribonuclease 7 large subunit (403 aa).

It belongs to the XseA family. As to quaternary structure, heterooligomer composed of large and small subunits.

It is found in the cytoplasm. The catalysed reaction is Exonucleolytic cleavage in either 5'- to 3'- or 3'- to 5'-direction to yield nucleoside 5'-phosphates.. Its function is as follows. Bidirectionally degrades single-stranded DNA into large acid-insoluble oligonucleotides, which are then degraded further into small acid-soluble oligonucleotides. This is Exodeoxyribonuclease 7 large subunit from Clostridium botulinum (strain Okra / Type B1).